Reading from the N-terminus, the 221-residue chain is Endo-1,4-beta-xylanase 11A (221 aa).

An N-terminal signal peptide occupies residues 1–17; sequence MVSFTTLLTAVATAVSA. The 191-residue stretch at 28–218 folds into the GH11 domain; sequence RGIQPGTGVH…SSGSAEIEVR (191 aa). The N-linked (GlcNAc...) asparagine glycan is linked to Asn-89. Glu-113 (nucleophile) is an active-site residue. Glu-205 functions as the Proton donor in the catalytic mechanism.

This sequence belongs to the glycosyl hydrolase 11 (cellulase G) family.

It is found in the secreted. The catalysed reaction is Endohydrolysis of (1-&gt;4)-beta-D-xylosidic linkages in xylans.. It functions in the pathway glycan degradation; xylan degradation. With respect to regulation, retains an activity of 52.5% in the presence of 5 mM SDS. Endo-1,4-beta-xylanase involved in the hydrolysis of xylan, a major structural heterogeneous polysaccharide found in plant biomass representing the second most abundant polysaccharide in the biosphere, after cellulose. Is an alkali-tolerant enzyme, exhibiting 50.6% of activity at pH 9.0, and 26.9% even at pH 10.0. This chain is Endo-1,4-beta-xylanase 11A, found in Humicola insolens (Soft-rot fungus).